Consider the following 36-residue polypeptide: Photosystem II reaction center protein Psb30 (36 aa).

A helical transmembrane segment spans residues 8-28 (IIAQLTVVTLTLLAGPVIVFL).

Belongs to the Psb30/Ycf12 family. In terms of assembly, PSII is composed of 1 copy each of membrane proteins PsbA, PsbB, PsbC, PsbD, PsbE, PsbF, PsbH, PsbI, PsbJ, PsbK, PsbL, PsbM, PsbT, PsbX, PsbY, PsbZ, Psb30/Ycf12, peripheral proteins of the oxygen-evolving complex and a large number of cofactors. It forms dimeric complexes.

It localises to the plastid. The protein localises to the cyanelle thylakoid membrane. Functionally, a core subunit of photosystem II (PSII), probably helps stabilize the reaction center. This is Photosystem II reaction center protein Psb30 from Cyanophora paradoxa.